The primary structure comprises 486 residues: MNRILSSASLLSNVSMPRQNKHKITKALCYAIIVASIGSIQFGYHLSELNAPQQVLSCSEFDIPMEGYPYDRTWLGKRGYKQCIPLNDEQIGIVTSVFCIGGILGSYFATSLANIYGRKFSSLINCTLNIVGSLIIFNSNSYRGLIIGRILVGISCGSLIVIIPLFIKEVAPSGWEGLLGSMTQICIRLGVLLTQGIALPLTDSYRWRWILFGSFLIAVLNFFMWFIVDESPKWLLAHGRVTDAKLSLCKLRGVTFDEAAQEIQDWQLQIESGDPLIEPTTTNSISGSNSLWKYLRDRTNVKSRHVITVLLFGQQFCGINSIVLYGTKIISQLYPQHAIRINFFISMVNVLVTILVSLLIHSLPRKPLLMTSTVLVSVTAFIMGIAMNHNKMNLLIVFSFIYMGVFTMGLNPLPFIIMREVSKPQDMVLAQRYGTICNWVGTFIIAYTFPIIHDVLSGYVFIIFAIIACSISAFIWKKVPETKRSG.

The Cytoplasmic segment spans residues 1-26 (MNRILSSASLLSNVSMPRQNKHKITK). A helical membrane pass occupies residues 27–47 (ALCYAIIVASIGSIQFGYHLS). The Mitochondrial intermembrane segment spans residues 48-90 (ELNAPQQVLSCSEFDIPMEGYPYDRTWLGKRGYKQCIPLNDEQ). Residues 91-111 (IGIVTSVFCIGGILGSYFATS) form a helical membrane-spanning segment. Topologically, residues 112-119 (LANIYGRK) are cytoplasmic. The helical transmembrane segment at 120 to 140 (FSSLINCTLNIVGSLIIFNSN) threads the bilayer. Topologically, residues 141-146 (SYRGLI) are mitochondrial intermembrane. A helical transmembrane segment spans residues 147–167 (IGRILVGISCGSLIVIIPLFI). Topologically, residues 168 to 178 (KEVAPSGWEGL) are cytoplasmic. A helical membrane pass occupies residues 179-199 (LGSMTQICIRLGVLLTQGIAL). Residues 200–208 (PLTDSYRWR) lie on the Mitochondrial intermembrane side of the membrane. The helical transmembrane segment at 209 to 229 (WILFGSFLIAVLNFFMWFIVD) threads the bilayer. At 230–305 (ESPKWLLAHG…RDRTNVKSRH (76 aa)) the chain is on the cytoplasmic side. Residues 306–326 (VITVLLFGQQFCGINSIVLYG) form a helical membrane-spanning segment. At 327–342 (TKIISQLYPQHAIRIN) the chain is on the mitochondrial intermembrane side. Residues 343–363 (FFISMVNVLVTILVSLLIHSL) form a helical membrane-spanning segment. Residues 364–366 (PRK) lie on the Cytoplasmic side of the membrane. Residues 367–387 (PLLMTSTVLVSVTAFIMGIAM) traverse the membrane as a helical segment. At 388–396 (NHNKMNLLI) the chain is on the mitochondrial intermembrane side. The chain crosses the membrane as a helical span at residues 397–417 (VFSFIYMGVFTMGLNPLPFII). Over 418–432 (MREVSKPQDMVLAQR) the chain is Cytoplasmic. The chain crosses the membrane as a helical span at residues 433–453 (YGTICNWVGTFIIAYTFPIIH). Position 454 (Asp-454) is a topological domain, mitochondrial intermembrane. The chain crosses the membrane as a helical span at residues 455–475 (VLSGYVFIIFAIIACSISAFI). Residues 476–486 (WKKVPETKRSG) lie on the Cytoplasmic side of the membrane.

It belongs to the major facilitator superfamily. Sugar transporter (TC 2.A.1.1) family.

It is found in the mitochondrion membrane. Functionally, may be involved in vacuolar protein sorting. This chain is Vacuolar protein sorting-associated protein 73 (VPS73), found in Saccharomyces cerevisiae (strain ATCC 204508 / S288c) (Baker's yeast).